We begin with the raw amino-acid sequence, 306 residues long: Beta-lactamase 1 (306 aa).

An N-terminal signal peptide occupies residues 1–43 (MKNKRMLKIGMCVGILGLSVTSLEAFTGGALQVEAKEKTGQVK). Residue Ser89 is the Acyl-ester intermediate of the active site. Catalysis depends on Glu185, which acts as the Proton acceptor. A substrate-binding site is contributed by 251-253 (KSG).

The protein belongs to the class-A beta-lactamase family.

It carries out the reaction a beta-lactam + H2O = a substituted beta-amino acid. In terms of biological role, this protein is a beta-lactamase with a substrate specificity for penicillins. The protein is Beta-lactamase 1 (blaCI) of Bacillus mycoides.